The chain runs to 183 residues: Ribulose bisphosphate carboxylase small subunit, chloroplastic (183 aa).

The N-terminal 59 residues, 1–59 (MASSMISSGTVATVSADRPAPAQARMVAPFTGLKSSSASPVTRKSNDITSIASNGGRVQ), are a transit peptide targeting the chloroplast.

It belongs to the RuBisCO small chain family. As to quaternary structure, heterohexadecamer of 8 large and 8 small subunits.

The protein localises to the plastid. It localises to the chloroplast. Its function is as follows. RuBisCO catalyzes two reactions: the carboxylation of D-ribulose 1,5-bisphosphate, the primary event in carbon dioxide fixation, as well as the oxidative fragmentation of the pentose substrate. Both reactions occur simultaneously and in competition at the same active site. Although the small subunit is not catalytic it is essential for maximal activity. This chain is Ribulose bisphosphate carboxylase small subunit, chloroplastic, found in Malus sp. (Crab apple).